A 662-amino-acid polypeptide reads, in one-letter code: Eukaryotic peptide chain release factor GTP-binding subunit (662 aa).

The segment at 1-220 (MASNQPNNGE…PATVTEDATD (220 aa)) is disordered. Positions 26–40 (AKAPTFTPKAAPFIP) are enriched in low complexity. Residues 62 to 89 (YTGQGQNSNSPHPTKSYQQYYQKPTGNT) show a composition bias toward polar residues. Basic and acidic residues predominate over residues 91–102 (DEDKSRVPDFSK). Residues 122–134 (GGNTSAPKSTKPI) are compositionally biased toward polar residues. Residues 141–158 (TKAPTTTKPAAPAAQSKT) are compositionally biased toward low complexity. T182 is subject to Phosphothreonine. The segment covering 192–213 (AKTPSAPAAALKKAAEAAEPAT) has biased composition (low complexity). The 229-residue stretch at 236–464 (KEHVNIVFIG…LDSMTHLERK (229 aa)) folds into the tr-type G domain. The G1 stretch occupies residues 245–252 (GHVDAGKS). 245–252 (GHVDAGKS) provides a ligand contact to GTP. Residues 301–305 (GKTVE) form a G2 region. The segment at 322-325 (DAPG) is G3. GTP-binding positions include 384–387 (NKMD) and 428–429 (AY). The tract at residues 384–387 (NKMD) is G4. The segment at 427-429 (SAY) is G5. Residue S539 is modified to Phosphoserine.

The protein belongs to the TRAFAC class translation factor GTPase superfamily. Classic translation factor GTPase family. ERF3 subfamily. In terms of assembly, component of the eRF1-eRF3-GTP ternary complex, composed of sup45/eRF1, sup35/eRF3 and GTP.

It is found in the cytoplasm. It carries out the reaction GTP + H2O = GDP + phosphate + H(+). GTPase component of the eRF1-eRF3-GTP ternary complex, a ternary complex that mediates translation termination in response to the termination codons. Sup35/eRF3 mediates sup45/ERF1 delivery to stop codons: The eRF1-eRF3-GTP complex binds to a stop codon in the ribosomal A-site. GTP hydrolysis by sup35/eRF3 induces a conformational change that leads to its dissociation, permitting sup45/eRF1 to accommodate fully in the A-site. The sequence is that of Eukaryotic peptide chain release factor GTP-binding subunit (sup35) from Schizosaccharomyces pombe (strain 972 / ATCC 24843) (Fission yeast).